Here is a 415-residue protein sequence, read N- to C-terminus: MDAEIISVGTEIVLGQIINTNAAYLANRLTQLDLPATYQTTVDDQSQRLERVINHALTRAQLVFVCGGLGPTADDITMPTVAKTLGKELQTDEEHWKWIQKTFEQRQIKMEPENIRQAQYPRGGEPLANPVGLALGCWYETKGKVVVVLPGPPAEFKAMVEKSLVPKLQQYFQTRKQITSRTLNFLGRPESQLMDEIEGATNDIPGISITSYVQPTAIQVRLTVRDLPVIEAEEKIDQAQKAILAVEEPFFFGVGDDLTLAKVVVEQLKKRGWKLTAAESLTGGMFQSAICSVPGASTVFNGGFVTYAASAKEKLLGIPHATIDRYGVVSSETAATMAEGCQRKLNVEVGIGFTGVAGPDMLEGQPAGTVWIGLAMKGRSTKTVQLHLASYVGRQAIRTLSVQYGLQLIYHELKK.

The protein belongs to the CinA family.

The chain is Putative competence-damage inducible protein from Limosilactobacillus reuteri (strain DSM 20016) (Lactobacillus reuteri).